The sequence spans 173 residues: Adenine phosphoribosyltransferase (173 aa).

The protein belongs to the purine/pyrimidine phosphoribosyltransferase family. In terms of assembly, homodimer.

The protein resides in the cytoplasm. It carries out the reaction AMP + diphosphate = 5-phospho-alpha-D-ribose 1-diphosphate + adenine. Its pathway is purine metabolism; AMP biosynthesis via salvage pathway; AMP from adenine: step 1/1. In terms of biological role, catalyzes a salvage reaction resulting in the formation of AMP, that is energically less costly than de novo synthesis. The sequence is that of Adenine phosphoribosyltransferase from Desulfosudis oleivorans (strain DSM 6200 / JCM 39069 / Hxd3) (Desulfococcus oleovorans).